We begin with the raw amino-acid sequence, 960 residues long: UPF0182 protein DSY1630 (960 aa).

7 helical membrane-spanning segments follow: residues 7 to 27 (IMLV…GLFE), 50 to 70 (IIQI…LFSI), 105 to 125 (TLWL…VTGF), 169 to 189 (FGPL…AGVI), 212 to 232 (LALL…FDTF), 256 to 276 (ALKA…LAFF), and 285 to 305 (LPIL…PMVL). Disordered regions lie at residues 866 to 899 (SALA…QEDT) and 924 to 960 (TGDS…KTNP). Acidic residues predominate over residues 881 to 897 (ETEETTEETEEPVDPQE). A compositionally biased stretch (basic and acidic residues) spans 931-944 (EGGKKADEDAHDVQ). Residues 950 to 960 (SVSSEQSKTNP) show a composition bias toward polar residues.

This sequence belongs to the UPF0182 family.

It localises to the cell membrane. In Desulfitobacterium hafniense (strain Y51), this protein is UPF0182 protein DSY1630.